The following is a 332-amino-acid chain: Methylthioribose-1-phosphate isomerase (332 aa).

Residues 44 to 46 (RGA), arginine 87, and glutamine 192 each bind substrate. Aspartate 233 serves as the catalytic Proton donor. Position 243–244 (243–244 (NK)) interacts with substrate.

This sequence belongs to the eIF-2B alpha/beta/delta subunits family. MtnA subfamily.

It catalyses the reaction 5-(methylsulfanyl)-alpha-D-ribose 1-phosphate = 5-(methylsulfanyl)-D-ribulose 1-phosphate. It participates in amino-acid biosynthesis; L-methionine biosynthesis via salvage pathway; L-methionine from S-methyl-5-thio-alpha-D-ribose 1-phosphate: step 1/6. Catalyzes the interconversion of methylthioribose-1-phosphate (MTR-1-P) into methylthioribulose-1-phosphate (MTRu-1-P). This is Methylthioribose-1-phosphate isomerase from Dehalococcoides mccartyi (strain CBDB1).